Reading from the N-terminus, the 610-residue chain is Glutamine--fructose-6-phosphate aminotransferase [isomerizing] (610 aa).

Residue Cys2 is the Nucleophile; for GATase activity of the active site. Positions 2–218 (CGIVGAVAQR…EGDVAEMTRR (217 aa)) constitute a Glutamine amidotransferase type-2 domain. SIS domains lie at 286-426 (AAEI…QQQR) and 459-600 (LAED…VDQP). The active-site For Fru-6P isomerization activity is the Lys605.

In terms of assembly, homodimer.

It localises to the cytoplasm. It catalyses the reaction D-fructose 6-phosphate + L-glutamine = D-glucosamine 6-phosphate + L-glutamate. Its function is as follows. Catalyzes the first step in hexosamine metabolism, converting fructose-6P into glucosamine-6P using glutamine as a nitrogen source. In Vibrio cholerae serotype O1 (strain ATCC 39315 / El Tor Inaba N16961), this protein is Glutamine--fructose-6-phosphate aminotransferase [isomerizing].